The sequence spans 360 residues: Aminomethyltransferase (360 aa).

The protein belongs to the GcvT family. As to quaternary structure, the glycine cleavage system is composed of four proteins: P, T, L and H.

It carries out the reaction N(6)-[(R)-S(8)-aminomethyldihydrolipoyl]-L-lysyl-[protein] + (6S)-5,6,7,8-tetrahydrofolate = N(6)-[(R)-dihydrolipoyl]-L-lysyl-[protein] + (6R)-5,10-methylene-5,6,7,8-tetrahydrofolate + NH4(+). Its function is as follows. The glycine cleavage system catalyzes the degradation of glycine. This Pseudomonas aeruginosa (strain ATCC 15692 / DSM 22644 / CIP 104116 / JCM 14847 / LMG 12228 / 1C / PRS 101 / PAO1) protein is Aminomethyltransferase.